The primary structure comprises 142 residues: Peptide methionine sulfoxide reductase MsrB (142 aa).

Residues 2–125 form the MsrB domain; it reads LKKDKSELTD…NSAAIQFIPY (124 aa). Cys-114 serves as the catalytic Nucleophile.

It belongs to the MsrB Met sulfoxide reductase family.

It catalyses the reaction L-methionyl-[protein] + [thioredoxin]-disulfide + H2O = L-methionyl-(R)-S-oxide-[protein] + [thioredoxin]-dithiol. This Staphylococcus aureus (strain USA300) protein is Peptide methionine sulfoxide reductase MsrB.